The primary structure comprises 473 residues: B box and SPRY domain-containing protein (473 aa).

The tract at residues 1–69 (MSADVSGTES…PKQGSERSQL (69 aa)) is disordered. A compositionally biased stretch (pro residues) spans 35–51 (KPGPGPEPRPESGPEPG). A B box-type zinc finger spans residues 65-113 (ERSQLCPEHFEPLSWFCLSERRPVCATCAGFGGRCHRHRIRRAEEHAEE). Residues 259–455 (SPLLTQLWAA…ISIVRGPLAT (197 aa)) enclose the B30.2/SPRY domain.

Interacts with YWHAZ/14-3-3 protein zeta. Interacts with TRPV5 and TRPV6. According to PubMed:10978534, testis-specific. According to PubMed:16371431, broadly expressed.

The protein resides in the cytoplasm. It is found in the membrane. Functionally, may regulate epithelial calcium transport by inhibiting TRPV5 activity. This Mus musculus (Mouse) protein is B box and SPRY domain-containing protein (Bspry).